Reading from the N-terminus, the 161-residue chain is ATP synthase subunit b (161 aa).

A helical membrane pass occupies residues 2–22 (VIEWGTALYQLLAFAVLLLIL).

The protein belongs to the ATPase B chain family. As to quaternary structure, F-type ATPases have 2 components, F(1) - the catalytic core - and F(0) - the membrane proton channel. F(1) has five subunits: alpha(3), beta(3), gamma(1), delta(1), epsilon(1). F(0) has three main subunits: a(1), b(2) and c(10-14). The alpha and beta chains form an alternating ring which encloses part of the gamma chain. F(1) is attached to F(0) by a central stalk formed by the gamma and epsilon chains, while a peripheral stalk is formed by the delta and b chains.

It localises to the cell membrane. In terms of biological role, f(1)F(0) ATP synthase produces ATP from ADP in the presence of a proton or sodium gradient. F-type ATPases consist of two structural domains, F(1) containing the extramembraneous catalytic core and F(0) containing the membrane proton channel, linked together by a central stalk and a peripheral stalk. During catalysis, ATP synthesis in the catalytic domain of F(1) is coupled via a rotary mechanism of the central stalk subunits to proton translocation. Component of the F(0) channel, it forms part of the peripheral stalk, linking F(1) to F(0). The chain is ATP synthase subunit b from Shouchella clausii (strain KSM-K16) (Alkalihalobacillus clausii).